We begin with the raw amino-acid sequence, 485 residues long: MIVSQYLSALTFVLLLFKESRTWSYHASTEMMTFEEARDYCQKTYTALVAIQNQEEIEYLNSTFSYSPSYYWIGIRKINGTWTWIGTNKSLTKEATNWAPGEPNNKQSDEDCVEIYIKREKDSGKWNDEKCTKQKLALCYKAACNPTPCGSHGECVETINNYTCQCHPGFKGLKCEQVVTCPAQKHPEHGHLVCNPLGKFTYNSSCSISCAEGYLPSSTEATRCMSSGEWSTPLPKCNVVKCDALSNLDNGVVNCSPNHGSLPWNTTCTFECQEGYKLTGPQHLQCTSSGIWDNKQPTCKAVSCAAISHPQNGTVNCSHSVVGDFAFKSSCHFTCAEGFTLQGPTQVECTAQGQWTQRVPVCEVVRCSRLDVSGKLNMNCSGEPVLGTECTFACPERWTLNGSVVLTCGATGHWSGMLPTCEAPTVSQTPLAVGLSTAGVSLVTIPSFLFWLLKRLQKKAKKFSPASSCSSLKSNGCYSTPSKLI.

An N-terminal signal peptide occupies residues 1–22 (MIVSQYLSALTFVLLLFKESRT). The C-type lectin domain occupies 23–140 (WSYHASTEMM…CTKQKLALCY (118 aa)). Residues 23–430 (WSYHASTEMM…CEAPTVSQTP (408 aa)) lie on the Extracellular side of the membrane. Disulfide bonds link C41–C139, C112–C131, C144–C155, C149–C164, C166–C175, C181–C224, C194–C206, C210–C237, C242–C286, C255–C268, C272–C299, C304–C349, C335–C362, C367–C408, and C394–C421. 3 N-linked (GlcNAc...) asparagine glycosylation sites follow: N61, N79, and N88. Positions 102, 104, and 110 each coordinate Ca(2+). Residues 102-110 (EPNNKQSDE), 114-119 (EIYIKR), and 127-129 (NDE) each bind a carbohydrate. Positions 127 and 128 each coordinate Ca(2+). Residues 141-176 (KAACNPTPCGSHGECVETINNYTCQCHPGFKGLKCE) form the EGF-like domain. N-linked (GlcNAc...) asparagine glycosylation is present at N161. Sushi domains lie at 179 to 239 (VTCP…KCNV), 240 to 301 (VKCD…TCKA), 302 to 364 (VSCA…VCEV), and 365 to 423 (VRCS…TCEA). An N-linked (GlcNAc...) asparagine glycan is attached at N203. N265 carries N-linked (GlcNAc...) asparagine glycosylation. N312 and N316 each carry an N-linked (GlcNAc...) asparagine glycan. N-linked (GlcNAc...) asparagine glycans are attached at residues N379 and N401. The helical transmembrane segment at 431–453 (LAVGLSTAGVSLVTIPSFLFWLL) threads the bilayer. Residues 454–485 (KRLQKKAKKFSPASSCSSLKSNGCYSTPSKLI) are Cytoplasmic-facing. The interval 466 to 485 (ASSCSSLKSNGCYSTPSKLI) is disordered.

The protein belongs to the selectin/LECAM family. Interacts with SELPLG/PSGL1 and PODXL2 through the sialyl Lewis X epitope. SELPLG sulfation appears not to be required for this interaction.

The protein resides in the cell membrane. Cell-surface glycoprotein having a role in immunoadhesion. Mediates in the adhesion of blood neutrophils in cytokine-activated endothelium through interaction with SELPLG/PSGL1. May have a role in capillary morphogenesis. In Bos taurus (Bovine), this protein is E-selectin (SELE).